A 300-amino-acid polypeptide reads, in one-letter code: Spermatogenesis-associated serine-rich protein 1 (300 aa).

Residues 1 to 10 (MSPSMLTGNS) show a composition bias toward polar residues. 2 disordered regions span residues 1 to 42 (MSPS…MTEV) and 64 to 91 (TPSG…LPRV). A compositionally biased stretch (basic and acidic residues) spans 27 to 42 (QLEKVPEKRDSGMTEV). The segment covering 64–85 (TPSGKSVSSSSSVETGPSVSEP) has biased composition (low complexity). A Phosphoserine modification is found at serine 113.

The sequence is that of Spermatogenesis-associated serine-rich protein 1 (SPATS1) from Homo sapiens (Human).